A 349-amino-acid chain; its full sequence is MTHQTGIHATTELRDFFAKARNGSVRLIKVIIEEEQLVLGAHKELARRWDVDYDAFVLPLLDEQQPCYVLYRLDSQNAQGYEWLFISWSPDNSPVRLKMLYAATRATVKKEFGGGHIKDEMFGTVKEDVSLSGYQKHVSSCSAPAPLTAAEQELQQIRINEVKTEISVESKHQTLQGLAFPLQLDAQQAIQTLKQKKINYIQLKLDLERETIDLVHTSPTDISDLPKRIPQDSARYHFFLYKHSHEGDYLESVVFIYSMPGYKCSIKERMLYSSCKSRLLDTVEQEFCLEIAKKIEIDDGAELTAEFLYDEVHPKQHAFKQAFAKPKGPVGKRGQKRLIKGPGENGEDS.

ADF-H domains lie at 4-139 (QTGI…KHVS) and 177-313 (GLAF…DEVH). The disordered stretch occupies residues 324 to 349 (AKPKGPVGKRGQKRLIKGPGENGEDS).

This sequence belongs to the actin-binding proteins ADF family. Twinfilin subfamily. In terms of assembly, interacts with G-actin; ADP-actin form and capping protein (CP).

It is found in the cytoplasm. It localises to the cytoskeleton. Its subcellular location is the perinuclear region. In terms of biological role, actin-binding protein involved in motile and morphological processes. Inhibits actin polymerization, likely by sequestering G-actin. This Gallus gallus (Chicken) protein is Twinfilin-2 (TWF2).